The chain runs to 343 residues: 3-isopropylmalate dehydrogenase (343 aa).

Positions 94, 104, 128, and 218 each coordinate substrate. Residues Asp-218, Asp-242, and Asp-246 each coordinate Mg(2+). An NAD(+)-binding site is contributed by 278-290 (GSAPDIAGQNKAN).

This sequence belongs to the isocitrate and isopropylmalate dehydrogenases family. LeuB type 2 subfamily. In terms of assembly, homodimer. The cofactor is Mg(2+). It depends on Mn(2+) as a cofactor.

The protein resides in the cytoplasm. The enzyme catalyses (2R,3S)-3-isopropylmalate + NAD(+) = 4-methyl-2-oxopentanoate + CO2 + NADH. The protein operates within amino-acid biosynthesis; L-leucine biosynthesis; L-leucine from 3-methyl-2-oxobutanoate: step 3/4. In terms of biological role, catalyzes the oxidation of 3-carboxy-2-hydroxy-4-methylpentanoate (3-isopropylmalate) to 3-carboxy-4-methyl-2-oxopentanoate. The product decarboxylates to 4-methyl-2 oxopentanoate. The polypeptide is 3-isopropylmalate dehydrogenase (Bifidobacterium longum subsp. infantis (strain ATCC 15697 / DSM 20088 / JCM 1222 / NCTC 11817 / S12)).